A 456-amino-acid polypeptide reads, in one-letter code: Alcohol acyltransferase 1 (456 aa).

Active-site proton acceptor residues include His166 and Asp382.

The protein belongs to the plant acyltransferase family. As to expression, expressed in fruit.

The enzyme catalyses 3-(methylsulfanyl)propanoyl-CoA + butan-1-ol = butyl 3-(methylsulfanyl)propanoate + CoA. It catalyses the reaction ethanol + benzoyl-CoA = ethyl benzoate + CoA. The catalysed reaction is butan-1-ol + benzoyl-CoA = butyl benzoate + CoA. It carries out the reaction 2-(methylsulfanyl)acetyl-CoA + butan-1-ol = butyl 2-(methylsulfanyl)acetate + CoA. Its function is as follows. Involved in the biosynthesis of volatile esters which confer kiwifruit flavor. Alcohol acyl transferase that can use a wide range of alcohols as substrate to produce esters. Exhibits benzoyl-CoA:alcohol O-acyltransferase activity. The protein is Alcohol acyltransferase 1 of Actinidia deliciosa (Kiwi).